The primary structure comprises 1215 residues: Cellulose synthase-like protein D4 (1215 aa).

Disordered regions lie at residues 24 to 46 (GGDA…SLGS) and 206 to 231 (SDTD…ERDQ). Positions 207–222 (DTDESDSVTDDDDDEA) are enriched in acidic residues. The next 2 membrane-spanning stretches (helical) occupy residues 321–341 (AILS…GFFL) and 352–372 (AVWL…SWLL). Residues Asp452 and Asp905 contribute to the active site. Transmembrane regions (helical) follow at residues 988–1008 (VFLL…KFIV), 1014–1034 (TFLA…LLEI), 1060–1080 (PAAV…SFTL), 1114–1134 (LMVP…VAAA), 1147–1167 (LLGG…FAKG), and 1177–1197 (TIVF…WVYI).

Belongs to the glycosyltransferase 2 family. Plant cellulose synthase-like D subfamily.

The protein localises to the golgi apparatus membrane. Its function is as follows. Thought to be a Golgi-localized beta-glycan synthase that polymerize the backbones of noncellulosic polysaccharides (hemicelluloses) of plant cell wall. The sequence is that of Cellulose synthase-like protein D4 (CSLD4) from Oryza sativa subsp. japonica (Rice).